A 1128-amino-acid chain; its full sequence is Apoptosis-stimulating of p53 protein 2 (1128 aa).

Disordered regions lie at residues 86–106 and 322–341; these read PGRD…RNGV and KENL…ASAP. The span at 322 to 339 shows a compositional bias: polar residues; the sequence is KENLPVSSDGNLPQQAAS. Residues 332–348 are interaction with APPBP1; the sequence is NLPQQAASAPSRVAAVG. Ser480 carries the post-translational modification Phosphoserine. Disordered stretches follow at residues 494–598 and 655–706; these read NVAK…LPPF and NQQQ…LPFL. Residues 528 to 537 show a composition bias toward polar residues; sequence GSSQQLSTVV. 4 positions are modified to phosphoserine: Ser556, Ser569, Ser572, and Ser576. Positions 558–575 are enriched in polar residues; that stretch reads SIPSVGQDQTLSPGSKQE. Over residues 655–670 the composition is skewed to polar residues; it reads NQQQHPENIYSNSQGK. Ser698, Ser714, and Ser737 each carry phosphoserine. Disordered stretches follow at residues 724-748 and 802-909; these read KLSN…NGPN and SLVP…TNLR. The segment covering 840–849 has biased composition (low complexity); sequence NSPNLQNNPE. The SH3-binding motif lies at 866-875; sequence YPPYPPPPYP. Pro residues predominate over residues 867–876; the sequence is PPYPPPPYPS. A mediates interaction with APC2 region spans residues 876–1128; the sequence is SGEPEGPGED…RIKPRQRSLA (253 aa). ANK repeat units follow at residues 926 to 957, 958 to 990, 991 to 1024, and 1025 to 1067; these read PLAL…LPND, EGIT…AADS, DGWT…MTYS, and DMQT…ALWD. The 63-residue stretch at 1057–1119 folds into the SH3 domain; the sequence is MNKGVIYALW…PRNLLGLYPR (63 aa).

The protein belongs to the ASPP family. As to quaternary structure, interacts with P53/TP53; the interaction promotes pro-apoptotic activity. Interacts with BCL2. Interacts with protein phosphatase 1. Interacts with RELA NF-kappa-B subunit. This interaction probably prevents the activation of apoptosis, possibly by preventing its interaction with TP53. Interacts with APC2 and NAE1. Interacts with DDX42 (via the C-terminus); the interaction is not inhibited by TP53BP2 ubiquitination and is independent of p53/TP53. Widely expressed. Expressed in spleen, thymus, prostate, testis, ovary, small intestine, colon and peripheral blood leukocyte. Reduced expression in breast carcinomas expressing a wild-type TP53 protein. Overexpressed in lung cancer cell lines.

It is found in the cytoplasm. The protein resides in the perinuclear region. The protein localises to the nucleus. Functionally, regulator that plays a central role in regulation of apoptosis and cell growth via its interactions with proteins such as TP53. Regulates TP53 by enhancing the DNA binding and transactivation function of TP53 on the promoters of proapoptotic genes in vivo. Inhibits the ability of NAE1 to conjugate NEDD8 to CUL1, and thereby decreases NAE1 ability to induce apoptosis. Impedes cell cycle progression at G2/M. Its apoptosis-stimulating activity is inhibited by its interaction with DDX42. The polypeptide is Apoptosis-stimulating of p53 protein 2 (TP53BP2) (Homo sapiens (Human)).